Consider the following 457-residue polypeptide: MPDLPSAFLPLLLLSKFVTPVTFRHHRYDDLVRTLYKVHNQCPDITRLYNIGRSVKGRYLYVLEFSDYPGTHEPLEPEVKYVGNMHGNEVLGRELLLQLSEFLCEEFRNRNQRILRLIQDTRIHILPSMNPDGYEVAAAQGPNTSGYLVGRNNANGVDLNRNFPDLNTYFYYNSKYGGPNHHLPLPDNWKSQVEPETRAVIQWIRSLNFVLSANMHGGAVVANYPYDKSLEHRFRSPHRTSNSPTPDDELFQTLAKVYSYAHGWMHQGWNCGDYFPDGITNGASWYSLSKGMQDFNYLHTNCFEITLELSCNKFPRQEELQREWLGNREALIQFLEQVHQGIKGMVLDENYNNLTGAVISVTGINHDVTSGEHGDYFRLLLPGTYSVTAKASGYEPKTVTVTVGPAGPTLVDFQLKRSTTQVHPVQKAPGRGQGSRAKQPRTSRKKDQAAKRHRGPA.

Residues 1 to 23 (MPDLPSAFLPLLLLSKFVTPVTF) form the signal peptide. The region spanning 24-338 (RHHRYDDLVR…EALIQFLEQV (315 aa)) is the Peptidase M14 domain. A disulfide bridge connects residues Cys42 and Cys104. Residues His86, Glu89, and His216 each contribute to the Zn(2+) site. A disulfide bridge connects residues Cys271 and Cys311. Catalysis depends on Glu308, which acts as the Proton donor/acceptor. Thr400, Thr402, and Thr409 each carry an O-linked (GalNAc...) threonine glycan. Residues 418–457 (STTQVHPVQKAPGRGQGSRAKQPRTSRKKDQAAKRHRGPA) are disordered.

It belongs to the peptidase M14 family. Tetramer of two catalytic chains and two glycosylated inactive chains. Zn(2+) serves as cofactor. As to expression, plasma. Expressed in liver.

It is found in the secreted. It localises to the extracellular space. The catalysed reaction is Release of a C-terminal basic amino acid, preferentially lysine.. Functionally, protects the body from potent vasoactive and inflammatory peptides containing C-terminal Arg or Lys (such as kinins or anaphylatoxins) which are released into the circulation. This Rattus norvegicus (Rat) protein is Carboxypeptidase N catalytic chain (Cpn1).